Reading from the N-terminus, the 451-residue chain is Velvet complex subunit 2 (451 aa).

3 disordered regions span residues 1–95 (MNTT…PRSI), 205–312 (PGQS…QTNP), and 426–451 (PIRK…DDDY). Composition is skewed to polar residues over residues 18 to 28 (TMPSLHDTTYR), 40 to 62 (MPQT…NSLP), and 205 to 217 (PGQS…SPTY). The Velvet domain maps to 92-428 (PRSITVDGRK…ATQGIKIPIR (337 aa)). The span at 267–283 (PQQSNYYYPQPSQSIPS) shows a compositional bias: low complexity. The segment covering 427–445 (IRKDGKDGPGKGGKDGSRG) has biased composition (basic and acidic residues).

It belongs to the velvet family. VelB subfamily. In terms of assembly, component of the heterotrimeric velvet complex composed of LAE1, VEL1 and VEL2; VEL1 acting as a bridging protein between LAE1 and VEL2. Forms a heterodimeric complex with VOS1; the formation of the VEL2-VOS1 complex is light-dependent.

It localises to the nucleus. The protein localises to the cytoplasm. Its function is as follows. Component of the velvet transcription factor complex that controls sexual/asexual developmental ratio in response to light, promoting sexual development in the darkness while stimulating asexual sporulation under illumination. The velvet complex acts as a global regulator for secondary metabolite gene expression. Component of the VEL2-VOS1 heterodimeric complex that plays a dual role in activating genes associated with spore maturation and repressing certain development-associated genes. The VEL2-VOS1 complex binds DNA through the DNA-binding domain of VOS1 that recognizes an 11-nucleotide consensus sequence 5'-CTGGCCGCGGC-3' consisting of two motifs in the promoters of key developmental regulatory genes. Controls the expression of the oxalic acid and melanin gene clusters. Involved in the resistance to oxidative stress. Required for full virulence. The chain is Velvet complex subunit 2 from Botryotinia fuckeliana (strain B05.10) (Noble rot fungus).